We begin with the raw amino-acid sequence, 158 residues long: Crossover junction endodeoxyribonuclease RuvC (158 aa).

Catalysis depends on residues Asp-7, Glu-66, and Asp-139. Residues Asp-7, Glu-66, and Asp-139 each contribute to the Mg(2+) site.

The protein belongs to the RuvC family. Homodimer which binds Holliday junction (HJ) DNA. The HJ becomes 2-fold symmetrical on binding to RuvC with unstacked arms; it has a different conformation from HJ DNA in complex with RuvA. In the full resolvosome a probable DNA-RuvA(4)-RuvB(12)-RuvC(2) complex forms which resolves the HJ. The cofactor is Mg(2+).

It localises to the cytoplasm. The enzyme catalyses Endonucleolytic cleavage at a junction such as a reciprocal single-stranded crossover between two homologous DNA duplexes (Holliday junction).. Functionally, the RuvA-RuvB-RuvC complex processes Holliday junction (HJ) DNA during genetic recombination and DNA repair. Endonuclease that resolves HJ intermediates. Cleaves cruciform DNA by making single-stranded nicks across the HJ at symmetrical positions within the homologous arms, yielding a 5'-phosphate and a 3'-hydroxyl group; requires a central core of homology in the junction. The consensus cleavage sequence is 5'-(A/T)TT(C/G)-3'. Cleavage occurs on the 3'-side of the TT dinucleotide at the point of strand exchange. HJ branch migration catalyzed by RuvA-RuvB allows RuvC to scan DNA until it finds its consensus sequence, where it cleaves and resolves the cruciform DNA. The sequence is that of Crossover junction endodeoxyribonuclease RuvC from Campylobacter hominis (strain ATCC BAA-381 / DSM 21671 / CCUG 45161 / LMG 19568 / NCTC 13146 / CH001A).